The sequence spans 162 residues: Ribosome maturation factor RimP (162 aa).

This sequence belongs to the RimP family.

It is found in the cytoplasm. Its function is as follows. Required for maturation of 30S ribosomal subunits. This is Ribosome maturation factor RimP from Syntrophotalea carbinolica (strain DSM 2380 / NBRC 103641 / GraBd1) (Pelobacter carbinolicus).